The chain runs to 214 residues: Orotate phosphoribosyltransferase (214 aa).

K26 is a binding site for 5-phospho-alpha-D-ribose 1-diphosphate. Residue 34–35 participates in orotate binding; it reads FF. 5-phospho-alpha-D-ribose 1-diphosphate-binding positions include 72-73, R98, K99, K102, H104, and 123-131; these read YK and DDVISAGTS. 2 residues coordinate orotate: S127 and R155.

It belongs to the purine/pyrimidine phosphoribosyltransferase family. PyrE subfamily. Homodimer. Requires Mg(2+) as cofactor.

The enzyme catalyses orotidine 5'-phosphate + diphosphate = orotate + 5-phospho-alpha-D-ribose 1-diphosphate. The protein operates within pyrimidine metabolism; UMP biosynthesis via de novo pathway; UMP from orotate: step 1/2. Its function is as follows. Catalyzes the transfer of a ribosyl phosphate group from 5-phosphoribose 1-diphosphate to orotate, leading to the formation of orotidine monophosphate (OMP). This chain is Orotate phosphoribosyltransferase, found in Chromobacterium violaceum (strain ATCC 12472 / DSM 30191 / JCM 1249 / CCUG 213 / NBRC 12614 / NCIMB 9131 / NCTC 9757 / MK).